A 295-amino-acid polypeptide reads, in one-letter code: Tyrosine transport system permease protein (295 aa).

8 helical membrane passes run 3–23, 57–77, 81–101, 122–142, 173–193, 200–220, 232–252, and 256–276; these read GIIS…GVYI, VVAT…TGIL, FKIS…SINL, ISPI…LDLF, ILGL…MAQF, NMGI…ITLF, IIVG…LGML, and LKLI…LNIS.

It belongs to the binding-protein-dependent transport system permease family. The complex is probably composed of two ATP-binding proteins (CDR20291_0806), two transmembrane proteins (CDR20291_0807) and a solute-binding protein (CDR20291_0805).

Its subcellular location is the cell membrane. Functionally, probably part of an ABC transporter complex involved in tyrosine uptake. May also import phenylalanine. Probably responsible for the translocation of the substrate across the membrane. The chain is Tyrosine transport system permease protein from Clostridioides difficile (strain R20291) (Peptoclostridium difficile).